We begin with the raw amino-acid sequence, 300 residues long: Ribosomal protein L11 methyltransferase (300 aa).

Residues Thr141, Gly164, Asp186, and Asn233 each coordinate S-adenosyl-L-methionine.

It belongs to the methyltransferase superfamily. PrmA family.

The protein localises to the cytoplasm. It catalyses the reaction L-lysyl-[protein] + 3 S-adenosyl-L-methionine = N(6),N(6),N(6)-trimethyl-L-lysyl-[protein] + 3 S-adenosyl-L-homocysteine + 3 H(+). In terms of biological role, methylates ribosomal protein L11. This chain is Ribosomal protein L11 methyltransferase, found in Synechocystis sp. (strain ATCC 27184 / PCC 6803 / Kazusa).